A 256-amino-acid polypeptide reads, in one-letter code: Trypsin alpha (256 aa).

The N-terminal stretch at 1-22 (MLKIVILLSAVVCALGGTVPEG) is a signal peptide. A propeptide spans 23–30 (LLPQLDGR) (activation peptide). Residues 31 to 254 (IVGGSATTIS…LRSWVISTAN (224 aa)) enclose the Peptidase S1 domain. Residues Cys56 and Cys72 are joined by a disulfide bond. Catalysis depends on charge relay system residues His71 and Asp116. Cystine bridges form between Cys180–Cys197 and Cys206–Cys230. Residue Ser210 is the Charge relay system of the active site.

Belongs to the peptidase S1 family.

It localises to the secreted. The protein localises to the extracellular space. The enzyme catalyses Preferential cleavage: Arg-|-Xaa, Lys-|-Xaa.. This Drosophila erecta (Fruit fly) protein is Trypsin alpha (alphaTry).